Here is a 96-residue protein sequence, read N- to C-terminus: Protein transport protein Sec61 subunit beta (96 aa).

Polar residues predominate over residues 1–17 (MPGPTPSGTNVGSSGRS). The interval 1-54 (MPGPTPSGTNVGSSGRSPSKAVAARAAGSTVRQRKNASCGTRSAGRTTSAGTGG) is disordered. Residue proline 2 is modified to N-acetylproline. The Cytoplasmic segment spans residues 2 to 70 (PGPTPSGTNV…EDSPGLKVGP (69 aa)). Serine 7 is modified (phosphoserine). Threonine 9 carries the phosphothreonine modification. Phosphoserine occurs at positions 13, 14, and 17. Cysteine 39 is lipidated: S-palmitoyl cysteine. Residues 40–50 (GTRSAGRTTSA) are compositionally biased toward low complexity. A helical transmembrane segment spans residues 71-91 (VPVLVMSLLFIAAVFMLHIWG).

It belongs to the SEC61-beta family. The SEC61 channel-forming translocon complex consists of channel-forming core components SEC61A1, SEC61B and SEC61G and different auxiliary components such as SEC62 and SEC63. The SEC61 channel associates with the multi-pass translocon (MPT) complex. Interacts with TRAM1.

It localises to the endoplasmic reticulum membrane. Component of SEC61 channel-forming translocon complex that mediates transport of signal peptide-containing precursor polypeptides across the endoplasmic reticulum (ER). Forms a ribosome receptor and a gated pore in the ER membrane, both functions required for cotranslational translocation of nascent polypeptides. The SEC61 channel is also involved in ER membrane insertion of transmembrane proteins: it mediates membrane insertion of the first few transmembrane segments of proteins, while insertion of subsequent transmembrane regions of multi-pass membrane proteins is mediated by the multi-pass translocon (MPT) complex. The SEC61 channel cooperates with the translocating protein TRAM1 to import nascent proteins into the ER. Required for PKD1/Polycystin-1 biogenesis. In Mus musculus (Mouse), this protein is Protein transport protein Sec61 subunit beta.